The primary structure comprises 151 residues: Sperm surface protein Sp17 (151 aa).

Positions 68-98 (FYNNHAFEEQEPPEKSDPKQEESQIPGKEEE) are enriched in basic and acidic residues. Disordered regions lie at residues 68 to 115 (FYNN…EKEE) and 130 to 151 (AREE…EENK). An IQ domain is found at 114 to 143 (EEVAAVKIQAAFRGHVAREEVKKMKTDSLQ).

In terms of assembly, homodimer. May interact with ROPN1. Testis- and sperm-specific.

It is found in the membrane. In terms of biological role, sperm surface zona pellucida binding protein. Helps to bind spermatozoa to the zona pellucida with high affinity. Might function in binding zona pellucida and carbohydrates. The chain is Sperm surface protein Sp17 (SPA17) from Macaca fascicularis (Crab-eating macaque).